The primary structure comprises 487 residues: Transcriptional adapter ADA2b (487 aa).

Polar residues predominate over residues 1-13 (MGRSRGNFQNFED). The segment at 1–25 (MGRSRGNFQNFEDPTQRTRKKKNAA) is disordered. Residues 42 to 98 (GGKYNCDYCQKDITGKIRIKCAVCPDFDLCIECMSVGAEITPHKCDHPYRVMGNLTF) form a ZZ-type zinc finger. Positions 47, 50, 62, 65, 71, 74, 84, and 88 each coordinate Zn(2+). One can recognise an SANT domain in the interval 100–152 (LICPDWSADDEMLLLEGLEIYGLGNWAEVAEHVGTKSKEQCLEHYRNIYLNSP). Residue lysine 216 is modified to N6-acetyllysine; by GCN5. The segment covering 368–383 (RKRKRENEEGMNRGKE) has biased composition (basic and acidic residues). The tract at residues 368 to 388 (RKRKRENEEGMNRGKESGQFG) is disordered. The SWIRM domain occupies 401 to 487 (QASSSYVNDL…MLVKKGIAQL (87 aa)).

As to quaternary structure, interacts in vitro with the HAT domain of GCN5 and with the DNA-binding domain of the transcriptional activator DREB1B/CBF1. Interacts with BZIP11. In terms of processing, acetylated in vitro by GCN5, but acetylation is not essential for biological activity. Expressed in roots, leaves, stems, flowers and siliques, with the strongest activity in the meristematic zones.

Its subcellular location is the nucleus. Functionally, required for the function of some acidic activation domains, which activate transcription from a distant site. The exact mechanism of action is not yet known. ADA2 stimulates the acetyltransferase activity of GCN5 on free histones or nucleosomes, probably by opening up the promoter region. Mediates auxin and cytokinin signals in the control of cell proliferation and might be involved in repression of a freezing tolerance pathway at warm temperature. Involved in the positive regulation of salt-induced gene expression by maintaining locus-specific acetylation of histones H4 and H3. The polypeptide is Transcriptional adapter ADA2b (ADA2B) (Arabidopsis thaliana (Mouse-ear cress)).